Here is a 798-residue protein sequence, read N- to C-terminus: Probable serine/threonine-protein kinase DDB_G0276461 (798 aa).

The Protein kinase domain maps to 54–324; sequence VTEVKLVAEG…DLLNYLNEIR (271 aa). Residues 60–68 and K82 contribute to the ATP site; that span reads VAEGGFGFV. D185 acts as the Proton acceptor in catalysis. 3 disordered regions span residues 330–538, 553–645, and 659–798; these read GLQT…NGNF, TNGS…SYNN, and SSAS…FGIL. Composition is skewed to low complexity over residues 335 to 406, 429 to 490, 506 to 538, 557 to 603, 611 to 642, and 659 to 678; these read SSNN…NTPN, SNSN…NNNN, PSPSNSNSNVIINNTNSSGKNNQNKSNSGNGNF, TNFE…INNS, SSGSLPQSRQSSFNSTPQQQQQQFNSSTNSGS, and SSASISSSGGVSNNSDNSWN. The span at 679–697 shows a compositional bias: polar residues; that stretch reads VTLTPSQSNKNSTGNLKPL. The span at 698-716 shows a compositional bias: low complexity; that stretch reads NNNNNNNNNNNNRFANNTN. Over residues 717 to 769 the composition is skewed to polar residues; the sequence is SSRDYSFDFSSPNTSNNNDFGSFVQPSSSSSLNTTHFSKPNYNVNLNQTTSMT. A compositionally biased stretch (low complexity) spans 770-790; that stretch reads NNYNNNNYNNNNNSNNNNNNS.

The protein belongs to the protein kinase superfamily. Ser/Thr protein kinase family.

It carries out the reaction L-seryl-[protein] + ATP = O-phospho-L-seryl-[protein] + ADP + H(+). It catalyses the reaction L-threonyl-[protein] + ATP = O-phospho-L-threonyl-[protein] + ADP + H(+). In Dictyostelium discoideum (Social amoeba), this protein is Probable serine/threonine-protein kinase DDB_G0276461.